We begin with the raw amino-acid sequence, 93 residues long: Neurophysin 1 (93 aa).

Cystine bridges form between C10–C54, C13–C27, C21–C44, C28–C34, C61–C74, C68–C86, and C75–C80.

This sequence belongs to the vasopressin/oxytocin family.

The protein localises to the secreted. Neurophysin 1 specifically binds oxytocin. This is Neurophysin 1 from Anser anser anser (Western greylag goose).